A 429-amino-acid polypeptide reads, in one-letter code: uncharacterized protein (429 aa).

Helical transmembrane passes span 27-47, 48-68, 78-98, 106-126, 142-162, 198-218, 219-239, 249-269, 288-308, 351-371, and 399-419; these read PFFF…QSIG, GIMT…VSIL, ILLC…YWVF, IFIL…FLAL, ALII…PAII, LLLA…TIVI, AILT…CFYF, VLLS…YFLD, FIVG…FGYL, LILD…IYFI, and FFIS…LIIL.

It is found in the cell membrane. In terms of biological role, may function as a transporter. This is an uncharacterized protein from Klebsiella pneumoniae.